Consider the following 102-residue polypeptide: C-X-C motif chemokine 10 (102 aa).

Residues 1 to 19 (MNKSGFLIFCLILLTLSQG) form the signal peptide. Arg-24 is modified (citrulline). 2 disulfides stabilise this stretch: Cys-28–Cys-55 and Cys-30–Cys-72.

It belongs to the intercrine alpha (chemokine CxC) family. As to quaternary structure, monomer, dimer, and tetramer. Interacts with CXCR3 (via N-terminus).

The protein resides in the secreted. In terms of biological role, pro-inflammatory cytokine that is involved in a wide variety of processes such as chemotaxis, differentiation, and activation of peripheral immune cells, regulation of cell growth, apoptosis and modulation of angiostatic effects. Plays thereby an important role during viral infections by stimulating the activation and migration of immune cells to the infected sites. Mechanistically, binding of CXCL10 to the CXCR3 receptor activates G protein-mediated signaling and results in downstream activation of phospholipase C-dependent pathway, an increase in intracellular calcium production and actin reorganization. In turn, recruitment of activated Th1 lymphocytes occurs at sites of inflammation. Activation of the CXCL10/CXCR3 axis also plays an important role in neurons in response to brain injury for activating microglia, the resident macrophage population of the central nervous system, and directing them to the lesion site. This recruitment is an essential element for neuronal reorganization. This chain is C-X-C motif chemokine 10 (CXCL10), found in Bos taurus (Bovine).